A 236-amino-acid chain; its full sequence is Ion-translocating oxidoreductase complex subunit E (236 aa).

Transmembrane regions (helical) follow at residues 18 to 38, 39 to 59, 69 to 89, 92 to 112, 128 to 148, and 182 to 202; these read ALVQ…ATNA, LGLG…VSAL, IPIY…LINA, FGLY…CIVI, ALDG…LGAL, and PFLL…MLAF. A disordered region spans residues 217-236; the sequence is RSAVGQALRGAAPTDNHEQA.

Belongs to the NqrDE/RnfAE family. As to quaternary structure, the complex is composed of six subunits: RnfA, RnfB, RnfC, RnfD, RnfE and RnfG.

It is found in the cell inner membrane. Functionally, part of a membrane-bound complex that couples electron transfer with translocation of ions across the membrane. The chain is Ion-translocating oxidoreductase complex subunit E from Edwardsiella ictaluri (strain 93-146).